The following is a 149-amino-acid chain: D-aminoacyl-tRNA deacylase (149 aa).

Residues 137–138 (GP) carry the Gly-cisPro motif, important for rejection of L-amino acids motif.

Belongs to the DTD family. As to quaternary structure, homodimer.

The protein localises to the cytoplasm. It carries out the reaction glycyl-tRNA(Ala) + H2O = tRNA(Ala) + glycine + H(+). It catalyses the reaction a D-aminoacyl-tRNA + H2O = a tRNA + a D-alpha-amino acid + H(+). In terms of biological role, an aminoacyl-tRNA editing enzyme that deacylates mischarged D-aminoacyl-tRNAs. Also deacylates mischarged glycyl-tRNA(Ala), protecting cells against glycine mischarging by AlaRS. Acts via tRNA-based rather than protein-based catalysis; rejects L-amino acids rather than detecting D-amino acids in the active site. By recycling D-aminoacyl-tRNA to D-amino acids and free tRNA molecules, this enzyme counteracts the toxicity associated with the formation of D-aminoacyl-tRNA entities in vivo and helps enforce protein L-homochirality. This Desulforamulus reducens (strain ATCC BAA-1160 / DSM 100696 / MI-1) (Desulfotomaculum reducens) protein is D-aminoacyl-tRNA deacylase.